Here is a 273-residue protein sequence, read N- to C-terminus: Bis(5'-nucleosyl)-tetraphosphatase, symmetrical (273 aa).

This sequence belongs to the Ap4A hydrolase family.

The enzyme catalyses P(1),P(4)-bis(5'-adenosyl) tetraphosphate + H2O = 2 ADP + 2 H(+). Functionally, hydrolyzes diadenosine 5',5'''-P1,P4-tetraphosphate to yield ADP. The protein is Bis(5'-nucleosyl)-tetraphosphatase, symmetrical of Proteus mirabilis (strain HI4320).